Here is an 80-residue protein sequence, read N- to C-terminus: Small ribosomal subunit protein uS17 (80 aa).

This sequence belongs to the universal ribosomal protein uS17 family. Part of the 30S ribosomal subunit.

Functionally, one of the primary rRNA binding proteins, it binds specifically to the 5'-end of 16S ribosomal RNA. The chain is Small ribosomal subunit protein uS17 from Brucella suis (strain ATCC 23445 / NCTC 10510).